The primary structure comprises 261 residues: tRNA pseudouridine synthase A (261 aa).

The active-site Nucleophile is the D51. Substrate is bound at residue Y109.

The protein belongs to the tRNA pseudouridine synthase TruA family. Homodimer.

The catalysed reaction is uridine(38/39/40) in tRNA = pseudouridine(38/39/40) in tRNA. In terms of biological role, formation of pseudouridine at positions 38, 39 and 40 in the anticodon stem and loop of transfer RNAs. This is tRNA pseudouridine synthase A from Shewanella frigidimarina (strain NCIMB 400).